We begin with the raw amino-acid sequence, 651 residues long: Threonine--tRNA ligase (651 aa).

The 61-residue stretch at 1–61 (MPTIQLPDGS…DKDVSLRIIT (61 aa)) folds into the TGS domain. The catalytic stretch occupies residues 242–533 (DHRLLAKKMD…LLEESAGKLP (292 aa)). Residues Cys-333, His-384, and His-510 each coordinate Zn(2+). The segment at 631–651 (ISQRSRKSPAPSPLFPVGGES) is disordered.

Belongs to the class-II aminoacyl-tRNA synthetase family. In terms of assembly, homodimer. Zn(2+) is required as a cofactor.

Its subcellular location is the cytoplasm. The enzyme catalyses tRNA(Thr) + L-threonine + ATP = L-threonyl-tRNA(Thr) + AMP + diphosphate + H(+). Functionally, catalyzes the attachment of threonine to tRNA(Thr) in a two-step reaction: L-threonine is first activated by ATP to form Thr-AMP and then transferred to the acceptor end of tRNA(Thr). Also edits incorrectly charged L-seryl-tRNA(Thr). This chain is Threonine--tRNA ligase, found in Coxiella burnetii (strain RSA 493 / Nine Mile phase I).